The primary structure comprises 417 residues: Probable dihydrofolate synthetase (417 aa).

ATP is bound at residue 34–37; it reads GKGS. Serine 58, glutamate 123, and histidine 151 together coordinate Mg(2+). Residues arginine 274 and aspartate 289 each contribute to the ATP site.

The protein belongs to the folylpolyglutamate synthase family.

The enzyme catalyses 7,8-dihydropteroate + L-glutamate + ATP = 7,8-dihydrofolate + ADP + phosphate + H(+). The protein operates within cofactor biosynthesis; tetrahydrofolylpolyglutamate biosynthesis. Glutamate-adding enzyme which catalyzes the binding of the first glutamyl side chain to dihydropteroate. Leads to the de nove synthesis of tetrahydrofolate. de novo. The sequence is that of Probable dihydrofolate synthetase (fol3) from Schizosaccharomyces pombe (strain 972 / ATCC 24843) (Fission yeast).